We begin with the raw amino-acid sequence, 510 residues long: Probable RNA-binding protein 46 (510 aa).

The tract at residues 23 to 42 (ENGQRKFGGPPPGWEGPPPP) is disordered. Residues 31–42 (GPPPGWEGPPPP) show a composition bias toward pro residues. RRM domains follow at residues 45 to 123 (REVF…VSLD), 125 to 207 (CRLF…WAEP), and 220 to 292 (RVLY…LAKP).

As to expression, expressed in the testis and ovary.

It is found in the cytoplasm. Functionally, essential for male and female fertility, playing a crucial role in regulating germ cell development by ensuring the proper progression of meiosis prophase I. The protein is Probable RNA-binding protein 46 (rbm46) of Danio rerio (Zebrafish).